Reading from the N-terminus, the 516-residue chain is Maturase K (516 aa).

It belongs to the intron maturase 2 family. MatK subfamily.

The protein localises to the plastid. The protein resides in the chloroplast. Its function is as follows. Usually encoded in the trnK tRNA gene intron. Probably assists in splicing its own and other chloroplast group II introns. This Medeola virginiana (Indian cucumber root) protein is Maturase K.